The following is a 346-amino-acid chain: tRNA N6-adenosine threonylcarbamoyltransferase (346 aa).

Histidine 111 and histidine 115 together coordinate Fe cation. Substrate is bound by residues 134–138, aspartate 167, glycine 180, and asparagine 279; that span reads LVSGG. Residue aspartate 307 participates in Fe cation binding.

It belongs to the KAE1 / TsaD family. Fe(2+) serves as cofactor.

It is found in the cytoplasm. It catalyses the reaction L-threonylcarbamoyladenylate + adenosine(37) in tRNA = N(6)-L-threonylcarbamoyladenosine(37) in tRNA + AMP + H(+). In terms of biological role, required for the formation of a threonylcarbamoyl group on adenosine at position 37 (t(6)A37) in tRNAs that read codons beginning with adenine. Is involved in the transfer of the threonylcarbamoyl moiety of threonylcarbamoyl-AMP (TC-AMP) to the N6 group of A37, together with TsaE and TsaB. TsaD likely plays a direct catalytic role in this reaction. The polypeptide is tRNA N6-adenosine threonylcarbamoyltransferase (Burkholderia cenocepacia (strain ATCC BAA-245 / DSM 16553 / LMG 16656 / NCTC 13227 / J2315 / CF5610) (Burkholderia cepacia (strain J2315))).